The chain runs to 815 residues: Chromatin assembly factor 1 subunit FAS1 (815 aa).

Disordered regions lie at residues 1–39 (MDEVSTVNENENRKTMIEPKKLNKRKREPTAIENLTSEE), 292–330 (NNKEKEETESRKRIKKQQDESEKEQKRREKEQAELKKQL), 434–477 (KLST…KKSR), 502–577 (QVVK…EGVQ), and 791–815 (RCLPPSTKPQPAVEDAAERLENENA). 2 stretches are compositionally biased toward basic and acidic residues: residues 10–21 (NENRKTMIEPKK) and 292–328 (NNKEKEETESRKRIKKQQDESEKEQKRREKEQAELKK). A coiled-coil region spans residues 244 to 336 (EEKLLLKQLE…KKQLQVQKQA (93 aa)). 2 stretches are compositionally biased toward acidic residues: residues 516-532 (LDYEVDSDEEWEEEEAG) and 554-576 (DDEDDSEDDFMVPDGYLSEDEGV). Residues 806–815 (AAERLENENA) show a composition bias toward basic and acidic residues.

It belongs to the CHAF1A family. Component of the chromatin assembly factor 1 (CAF-1) complex, composed of FAS1, FAS2 and MSI1. Interacts with CYP71. As to expression, expressed in the shoot apical meristem, young leaf primordia, root tip and first lateral root primordium at the hypocotyl/root junction.

It localises to the nucleus. Functionally, component of the chromatin assembly factor complex (CAF-1) involved in chromatin assembly following DNA replication and DNA repair. Assembles histone octamers onto replicating DNA in vitro. Required for several aspects of development, including seedling growth and leaf hair differentiation. Plays a critical role in the organization of shoot apical meristem (SAM) and root apical meristem (RAM) during postembryonic development by facilitating stable maintenance of gene expression states. Seems not required to maintain transcriptional repression of heterochromatic genes. Involved in heterologous recombination. May repress endocycle. This chain is Chromatin assembly factor 1 subunit FAS1 (FAS1), found in Arabidopsis thaliana (Mouse-ear cress).